A 423-amino-acid chain; its full sequence is Ribosome biogenesis protein WDR12 homolog (423 aa).

The segment at 10–93 is ubiquitin-like (UBL) domain; sequence VQVHLKTKQE…EDAIEIEYVE (84 aa). WD repeat units follow at residues 105–142, 144–186, 193–232, 253–291, 293–332, 338–378, and 382–420; these read LHDDWVSAVKVSGKWILTGCYDNTLNIWTHKGKHILTI, GHTA…NAVE, GHERGVDSISVSPDATRFATGSWDTMLKVWSAAEDDAGGD, GHRESISAVQWIDTSTLLTTSWDHTMKIWDLSLEGIKTE, STNKSIFDASYSNLNRLIVTASADKNLRLYDPRTNQGSIV, GHNA…APLY, and GHGEKVLDIDWSNPKYICSGGADNTVRVFKSRKAGVETM.

The protein belongs to the WD repeat WDR12/YTM1 family.

Its subcellular location is the nucleus. The protein resides in the nucleolus. It is found in the nucleoplasm. Functionally, required for maturation of ribosomal RNAs and formation of the large ribosomal subunit. The sequence is that of Ribosome biogenesis protein WDR12 homolog from Drosophila willistoni (Fruit fly).